The following is a 219-amino-acid chain: Orotate phosphoribosyltransferase (219 aa).

A 5-phospho-alpha-D-ribose 1-diphosphate-binding site is contributed by lysine 26. Position 34–35 (34–35) interacts with orotate; sequence FF. 5-phospho-alpha-D-ribose 1-diphosphate-binding positions include 72–73, arginine 98, lysine 99, lysine 102, histidine 104, and 124–132; these read YK and DDVITAGTA. 2 residues coordinate orotate: threonine 128 and arginine 156.

Belongs to the purine/pyrimidine phosphoribosyltransferase family. PyrE subfamily. In terms of assembly, homodimer. Requires Mg(2+) as cofactor.

It catalyses the reaction orotidine 5'-phosphate + diphosphate = orotate + 5-phospho-alpha-D-ribose 1-diphosphate. It functions in the pathway pyrimidine metabolism; UMP biosynthesis via de novo pathway; UMP from orotate: step 1/2. Its function is as follows. Catalyzes the transfer of a ribosyl phosphate group from 5-phosphoribose 1-diphosphate to orotate, leading to the formation of orotidine monophosphate (OMP). The polypeptide is Orotate phosphoribosyltransferase (Stenotrophomonas maltophilia (strain R551-3)).